The following is a 31-amino-acid chain: Cytochrome b6-f complex subunit 6 (31 aa).

The chain crosses the membrane as a helical span at residues 3–23 (ILINYFLLVGFCFALASGLFL).

This sequence belongs to the PetL family. In terms of assembly, the 4 large subunits of the cytochrome b6-f complex are cytochrome b6, subunit IV (17 kDa polypeptide, PetD), cytochrome f and the Rieske protein, while the 4 small subunits are PetG, PetL, PetM and PetN. The complex functions as a dimer.

The protein resides in the plastid. The protein localises to the chloroplast thylakoid membrane. Its function is as follows. Component of the cytochrome b6-f complex, which mediates electron transfer between photosystem II (PSII) and photosystem I (PSI), cyclic electron flow around PSI, and state transitions. PetL is important for photoautotrophic growth as well as for electron transfer efficiency and stability of the cytochrome b6-f complex. The polypeptide is Cytochrome b6-f complex subunit 6 (Thalassiosira pseudonana (Marine diatom)).